The primary structure comprises 577 residues: Calcium-dependent protein kinase 22 (577 aa).

Glycine 2 is lipidated: N-myristoyl glycine. Residues 105–368 (YRLGAELGRG…AKEVLEHPWL (264 aa)) enclose the Protein kinase domain. ATP is bound by residues 111–119 (LGRGEFGVT) and lysine 134. Catalysis depends on aspartate 234, which acts as the Proton acceptor. The autoinhibitory domain stretch occupies residues 374–404 (APNVSLGEIVRSRLMQFSAMNKFKKKALGVV). EF-hand domains are found at residues 411–446 (EEMDKYTQMFHKMDKDNSGNLTLEDLKLGLQINGHP), 447–482 (VPETEIEMLLEAGDIDGNGTLDCEEFVTVLLHIKKM), 483–518 (SNEEYLPKAFKFFDKDGNGFIEMEELMDALGDELGP), and 520–553 (EQVVKDIIRDIDTDKDGRISYQEFESMMISGSDW). Ca(2+)-binding residues include aspartate 424, aspartate 426, serine 428, asparagine 430, aspartate 435, aspartate 460, aspartate 462, asparagine 464, threonine 466, glutamate 471, aspartate 496, aspartate 498, asparagine 500, glutamate 507, aspartate 531, aspartate 533, aspartate 535, arginine 537, and glutamate 542.

It belongs to the protein kinase superfamily. Ser/Thr protein kinase family. CDPK subfamily.

The protein resides in the membrane. It catalyses the reaction L-seryl-[protein] + ATP = O-phospho-L-seryl-[protein] + ADP + H(+). The enzyme catalyses L-threonyl-[protein] + ATP = O-phospho-L-threonyl-[protein] + ADP + H(+). Activated by calcium. Autophosphorylation may play an important role in the regulation of the kinase activity. In terms of biological role, may play a role in signal transduction pathways that involve calcium as a second messenger. The polypeptide is Calcium-dependent protein kinase 22 (Oryza sativa subsp. japonica (Rice)).